The chain runs to 330 residues: Quinone oxidoreductase (330 aa).

Ala2 carries the N-acetylalanine modification. Lys23 is subject to N6-acetyllysine. Residues Tyr53, 158–161, Gly181, His200, Asn229, 246–249, and 269–271 contribute to the NADP(+) site; these read SGGV, VGSK, and VTL. The residue at position 248 (Ser248) is a Phosphoserine.

It belongs to the zinc-containing alcohol dehydrogenase family. Quinone oxidoreductase subfamily. As to quaternary structure, homotetramer.

It localises to the cytoplasm. The enzyme catalyses 2 a quinone + NADPH + H(+) = 2 a 1,4-benzosemiquinone + NADP(+). In terms of biological role, does not have alcohol dehydrogenase activity. Binds NADP and acts through a one-electron transfer process. Orthoquinones, such as 1,2-naphthoquinone or 9,10-phenanthrenequinone, are the best substrates (in vitro). May act in the detoxification of xenobiotics. Interacts with (AU)-rich elements (ARE) in the 3'-UTR of target mRNA species and enhances their stability. NADPH binding interferes with mRNA binding. This Lama guanicoe (Guanaco) protein is Quinone oxidoreductase (CRYZ).